The sequence spans 67 residues: MMSKLGVLLTICLLLFPLTAVQLDGDQPADLPELRAQDFAPERSPWFDPVRRCCSQDCRVCIPCCPN.

Positions 1–20 (MMSKLGVLLTICLLLFPLTA) are cleaved as a signal peptide. Positions 21-50 (VQLDGDQPADLPELRAQDFAPERSPWFDPV) are excised as a propeptide. 3 disulfide bridges follow: cysteine 53–cysteine 65, cysteine 54–cysteine 61, and cysteine 58–cysteine 64. The residue at position 63 (proline 63) is a 4-hydroxyproline.

It belongs to the conotoxin M superfamily. In terms of tissue distribution, expressed by the venom duct.

It is found in the secreted. In Conus tessulatus (Tessellate cone), this protein is Conotoxin TsMMSK-B021.